A 597-amino-acid chain; its full sequence is Nucleolar protein 58 (597 aa).

The Nop domain maps to 285-410 (IAPNMTELVG…LENNLRQLEG (126 aa)). Positions 452–597 (AEAPKKPLIQ…KKKKKKSSKE (146 aa)) are disordered. The span at 482 to 499 (KSKKDKKEKKEKKDKKAK) shows a compositional bias: basic residues. The segment covering 532–551 (IKEDGTLEILSKKDFKGKDA) has biased composition (basic and acidic residues). Residues 552–561 (EAEEEAEEEE) are compositionally biased toward acidic residues. The segment covering 588-597 (KKKKKKSSKE) has biased composition (basic residues).

This sequence belongs to the NOP5/NOP56 family.

It localises to the nucleus. The protein resides in the nucleolus. Its function is as follows. Required for pre-18S rRNA processing. May bind microtubules. This is Nucleolar protein 58 (nop-58) from Neurospora crassa (strain ATCC 24698 / 74-OR23-1A / CBS 708.71 / DSM 1257 / FGSC 987).